We begin with the raw amino-acid sequence, 148 residues long: UPF0208 membrane protein HD_1715 (148 aa).

Transmembrane regions (helical) follow at residues 41-60 (AARF…YFFT) and 66-88 (ILAN…LYWL).

This sequence belongs to the UPF0208 family.

The protein localises to the cell inner membrane. The protein is UPF0208 membrane protein HD_1715 of Haemophilus ducreyi (strain 35000HP / ATCC 700724).